The primary structure comprises 188 residues: Elongation factor P (188 aa).

It belongs to the elongation factor P family.

Its subcellular location is the cytoplasm. The protein operates within protein biosynthesis; polypeptide chain elongation. Involved in peptide bond synthesis. Stimulates efficient translation and peptide-bond synthesis on native or reconstituted 70S ribosomes in vitro. Probably functions indirectly by altering the affinity of the ribosome for aminoacyl-tRNA, thus increasing their reactivity as acceptors for peptidyl transferase. The sequence is that of Elongation factor P from Streptomyces avermitilis (strain ATCC 31267 / DSM 46492 / JCM 5070 / NBRC 14893 / NCIMB 12804 / NRRL 8165 / MA-4680).